A 1347-amino-acid chain; its full sequence is Protocadherin-11 X-linked (1347 aa).

An N-terminal signal peptide occupies residues 1-23 (MDLLSGTYIFAVLLACVVFHSGA). Topologically, residues 24 to 812 (QEKNYTIREE…VSSPTSDYVK (789 aa)) are extracellular. 7 consecutive Cadherin domains span residues 26 to 139 (KNYT…APLF), 140 to 249 (PATV…HPVF), 250 to 355 (KETE…VPSI), 362 to 466 (NPIN…APVF), 467 to 570 (TQSF…SPVF), 571 to 673 (THNE…KPVF), and 677 to 795 (PSNY…APVT). 3 N-linked (GlcNAc...) asparagine glycosylation sites follow: Asn27, Asn48, and Asn54. Asn344 is a glycosylation site (N-linked (GlcNAc...) asparagine). Residue Asn553 is glycosylated (N-linked (GlcNAc...) asparagine). An N-linked (GlcNAc...) asparagine glycan is attached at Asn773. The chain crosses the membrane as a helical span at residues 813 to 833 (ILVAAVAGTVTVVVVIFITAV). The Cytoplasmic segment spans residues 834–1347 (VRCRQAPHLK…DSPIMEEHPL (514 aa)). Disordered stretches follow at residues 1031-1050 (IWIHPQPQRKSEGKGAGKSQ), 1057-1091 (LPEGSQESSSDGGLGEHDAGSLTSTSHGLPLGYPQ), 1097-1116 (RATPSNRTEGDGNSDPESTF), and 1325-1347 (TFTPRQQARPSRGDSPIMEEHPL).

It is found in the cell membrane. In terms of biological role, potential calcium-dependent cell-adhesion protein. The polypeptide is Protocadherin-11 X-linked (PCDH11X) (Pongo pygmaeus (Bornean orangutan)).